The sequence spans 103 residues: MSNIDLKPKTKAKAKIKVERPKLHKVILVNDDYTPREFVVSVLKGEFRMTEDQATKVMLTAHQRGVCVVGVFTKDVAETKATRATDAGRAKGYPLLFTTEPEE.

This sequence belongs to the ClpS family. In terms of assembly, binds to the N-terminal domain of the chaperone ClpA.

In terms of biological role, involved in the modulation of the specificity of the ClpAP-mediated ATP-dependent protein degradation. The chain is ATP-dependent Clp protease adapter protein ClpS 1 from Rhodopseudomonas palustris (strain ATCC BAA-98 / CGA009).